Reading from the N-terminus, the 359-residue chain is Photosystem II protein D1 1 (359 aa).

The next 3 membrane-spanning stretches (helical) occupy residues 29 to 46 (YVGWFGVLMIPTLLAATT), 118 to 133 (HFLIGIYAYMGREWEL), and 142 to 156 (WICIAYSAPVAAASA). H118 is a binding site for chlorophyll a. Position 126 (Y126) interacts with pheophytin a. [CaMn4O5] cluster is bound by residues D170 and E189. A helical membrane pass occupies residues 197–218 (FHMLGVAGVFGGSLFSAMHGSL). H198 is a chlorophyll a binding site. A quinone contacts are provided by residues H215 and 264–265 (SF). A Fe cation-binding site is contributed by H215. Residue H272 coordinates Fe cation. Residues 274-288 (FLAAWPVVGIWFTAL) traverse the membrane as a helical segment. Positions 332, 333, 342, and 344 each coordinate [CaMn4O5] cluster. Positions 345 to 359 (AAESAPVALQAPAIG) are excised as a propeptide.

Belongs to the reaction center PufL/M/PsbA/D family. PSII is composed of 1 copy each of membrane proteins PsbA, PsbB, PsbC, PsbD, PsbE, PsbF, PsbH, PsbI, PsbJ, PsbK, PsbL, PsbM, PsbT, PsbX, PsbY, PsbZ, Psb30/Ycf12, peripheral proteins PsbO, CyanoQ (PsbQ), PsbU, PsbV and a large number of cofactors. It forms dimeric complexes. It depends on The D1/D2 heterodimer binds P680, chlorophylls that are the primary electron donor of PSII, and subsequent electron acceptors. It shares a non-heme iron and each subunit binds pheophytin, quinone, additional chlorophylls, carotenoids and lipids. D1 provides most of the ligands for the Mn4-Ca-O5 cluster of the oxygen-evolving complex (OEC). There is also a Cl(-1) ion associated with D1 and D2, which is required for oxygen evolution. The PSII complex binds additional chlorophylls, carotenoids and specific lipids. as a cofactor. Tyr-161 forms a radical intermediate that is referred to as redox-active TyrZ, YZ or Y-Z. In terms of processing, C-terminally processed by CtpA; processing is essential to allow assembly of the oxygen-evolving complex and thus photosynthetic growth.

Its subcellular location is the cellular thylakoid membrane. The enzyme catalyses 2 a plastoquinone + 4 hnu + 2 H2O = 2 a plastoquinol + O2. Functionally, photosystem II (PSII) is a light-driven water:plastoquinone oxidoreductase that uses light energy to abstract electrons from H(2)O, generating O(2) and a proton gradient subsequently used for ATP formation. It consists of a core antenna complex that captures photons, and an electron transfer chain that converts photonic excitation into a charge separation. The D1/D2 (PsbA/PsbD) reaction center heterodimer binds P680, the primary electron donor of PSII as well as several subsequent electron acceptors. In Synechococcus sp. (strain RCC307), this protein is Photosystem II protein D1 1.